Consider the following 489-residue polypeptide: Betaine aldehyde dehydrogenase (489 aa).

Residues Thr-26 and Asp-93 each contribute to the K(+) site. 150 to 152 (GAW) lines the NAD(+) pocket. Lys-162 (charge relay system) is an active-site residue. 176-179 (KPSE) provides a ligand contact to NAD(+). Val-180 serves as a coordination point for K(+). 229-232 (GVET) serves as a coordination point for NAD(+). Residue Leu-245 participates in K(+) binding. Residue Glu-251 is the Proton acceptor of the active site. NAD(+)-binding residues include Gly-253, Cys-285, and Glu-386. The active-site Nucleophile is Cys-285. Cys-285 is modified (cysteine sulfenic acid (-SOH)). Lys-456 and Gly-459 together coordinate K(+). The active-site Charge relay system is the Glu-463.

Belongs to the aldehyde dehydrogenase family. Dimer of dimers. Requires K(+) as cofactor.

The catalysed reaction is betaine aldehyde + NAD(+) + H2O = glycine betaine + NADH + 2 H(+). It functions in the pathway amine and polyamine biosynthesis; betaine biosynthesis via choline pathway; betaine from betaine aldehyde: step 1/1. Involved in the biosynthesis of the osmoprotectant glycine betaine. Catalyzes the irreversible oxidation of betaine aldehyde to the corresponding acid. The polypeptide is Betaine aldehyde dehydrogenase (Burkholderia pseudomallei (strain 668)).